Here is an 883-residue protein sequence, read N- to C-terminus: Glutamate receptor 2 (883 aa).

The N-terminal stretch at 1 to 24 is a signal peptide; that stretch reads MQKIMHISVLLSPVLWGLIFGVSS. Residues 25-543 lie on the Extracellular side of the membrane; that stretch reads NSIQIGGLFP…GVFSFLDPLA (519 aa). Cys78 and Cys330 are joined by a disulfide. 4 N-linked (GlcNAc...) asparagine glycosylation sites follow: Asn256, Asn370, Asn406, and Asn413. L-glutamate contacts are provided by Pro499, Thr501, and Arg506. Residues 544–564 traverse the membrane as a helical segment; that stretch reads YEIWMCIVFAYIGVSVVLFLV. Over 565–591 the chain is Cytoplasmic; the sequence is SRFSPYEWHTEEFEDGRETQSSESTNE. An intramembrane region (helical; Pore-forming) is located at residues 592–607; that stretch reads FGIFNSLWFSLGAFMQ. Residues 608 to 610 lie within the membrane without spanning it; it reads QGC. The S-palmitoyl cysteine moiety is linked to residue Cys610. Residues 611–616 are Cytoplasmic-facing; that stretch reads DISPRS. Residues 617–637 traverse the membrane as a helical segment; the sequence is LSGRIVGGVWWFFTLIIISSY. Topologically, residues 638-812 are extracellular; sequence TANLAAFLTV…EKTSALSLSN (175 aa). Ser675 and Thr676 together coordinate L-glutamate. At Ser683 the chain carries Phosphoserine; by PKC. The residue at position 717 (Ser717) is a Phosphoserine; by PKG. Glu726 is a binding site for L-glutamate. Cysteines 739 and 794 form a disulfide. A helical membrane pass occupies residues 813-833; sequence VAGVFYILVGGLGLAMLVALI. At 834-883 the chain is on the cytoplasmic side; it reads EFCYKSRAEAKRMKVAKNAQNINPSSSQNSQNFATYKEGYNVYGIESVKI. The S-palmitoyl cysteine moiety is linked to residue Cys836. 2 positions are modified to phosphoserine: Ser860 and Ser863. The tract at residues 867 to 877 is required for interaction with IQSEC1; sequence ATYKEGYNVYG. Residue Tyr876 is modified to Phosphotyrosine. Ser880 carries the post-translational modification Phosphoserine.

It belongs to the glutamate-gated ion channel (TC 1.A.10.1) family. GRIA2 subfamily. Homotetramer or heterotetramer of pore-forming glutamate receptor subunits. Tetramers may be formed by the dimerization of dimers. May interact with MPP4. Forms a ternary complex with GRIP1 and CSPG4. Interacts with ATAD1 in an ATP-dependent manner. ATAD1-catalyzed ATP hydrolysis disrupts binding to ATAD1 and to GRIP1 and leads to AMPAR complex disassembly. Interacts with GRIP1 and GRIP2. Interacts with NSF via its C-terminus. Isoform 1, but not isoform 3, interacts with PICK1. Interacts with CACNG2. Interacts with GRIA1 and SYNDIG1. Part of a complex containing GRIA2, NSF and NAPA and/or NAPB. Interacts with SNX27 (via PDZ domain); the interaction is required for recycling to the plasma membrane when endocytosed and prevent degradation in lysosomes. Interacts with LRFN1. Found in a complex with GRIA1, GRIA3, GRIA4, CNIH2, CNIH3, CACNG2, CACNG3, CACNG4, CACNG5, CACNG7 and CACNG8. Interacts with CACNG5. Interacts with OLFM2. Interacts with AP4B1, AP4E1 and AP4M1; probably indirect it mediates the somatodendritic localization of GRIA2 in neurons. Forms a complex with GRIP1, NSG1 and STX12; controls the intracellular fate of AMPAR and the endosomal sorting of the GRIA2 subunit toward recycling and membrane targeting. Interacts with IQSEC1; the interaction is required for ARF6 activation. Interacts (heterotetramer form) with CNIH2 and CNIH3; this interaction promotes expression at the plasma membrane and extensively modulates their gating properties by slowing deactivation and desensitization kinetics. Post-translationally, palmitoylated. Depalmitoylated upon L-glutamate stimulation. Cys-610 palmitoylation leads to Golgi retention and decreased cell surface expression. In contrast, Cys-836 palmitoylation does not affect cell surface expression but regulates stimulation-dependent endocytosis. Ubiquitinated by RNF167, leading to its degradation. In terms of processing, phosphorylation at Tyr-876 is required for interaction with IQSEC1 and ARF6 activation, which in turn triggers AMPAR internalization for persistent synaptic depression. Post-translationally, N-glycosylated.

The protein resides in the cell membrane. It is found in the postsynaptic cell membrane. The protein localises to the postsynaptic density membrane. It carries out the reaction Ca(2+)(in) = Ca(2+)(out). It catalyses the reaction Na(+)(in) = Na(+)(out). In terms of biological role, ionotropic glutamate receptor that functions as a ligand-gated cation channel, gated by L-glutamate and glutamatergic agonists such as alpha-amino-3-hydroxy-5-methyl-4-isoxazolepropionic acid (AMPA), quisqualic acid, and kainic acid. L-glutamate acts as an excitatory neurotransmitter at many synapses in the central nervous system and plays an important role in fast excitatory synaptic transmission. Binding of the excitatory neurotransmitter L-glutamate induces a conformation change, leading to the opening of the cation channel, and thereby converts the chemical signal to an electrical impulse upon entry of monovalent and divalent cations such as sodium and calcium. The receptor then desensitizes rapidly and enters in a transient inactive state, characterized by the presence of bound agonist. In the presence of CACNG4 or CACNG7 or CACNG8, shows resensitization which is characterized by a delayed accumulation of current flux upon continued application of L-glutamate. Through complex formation with NSG1, GRIP1 and STX12 controls the intracellular fate of AMPAR and the endosomal sorting of the GRIA2 subunit toward recycling and membrane targeting. This is Glutamate receptor 2 from Homo sapiens (Human).